Consider the following 89-residue polypeptide: Small ribosomal subunit protein uS15 (89 aa).

Belongs to the universal ribosomal protein uS15 family. Part of the 30S ribosomal subunit. Forms a bridge to the 50S subunit in the 70S ribosome, contacting the 23S rRNA.

Its function is as follows. One of the primary rRNA binding proteins, it binds directly to 16S rRNA where it helps nucleate assembly of the platform of the 30S subunit by binding and bridging several RNA helices of the 16S rRNA. Forms an intersubunit bridge (bridge B4) with the 23S rRNA of the 50S subunit in the ribosome. This is Small ribosomal subunit protein uS15 from Gluconacetobacter diazotrophicus (strain ATCC 49037 / DSM 5601 / CCUG 37298 / CIP 103539 / LMG 7603 / PAl5).